The following is a 654-amino-acid chain: Fructose-1,6-bisphosphatase class 3 (654 aa).

The tract at residues 288–307 (NPAFKPKKRPDKHERLTQRE) is disordered. The span at 298–307 (DKHERLTQRE) shows a compositional bias: basic and acidic residues.

It belongs to the FBPase class 3 family. Mn(2+) serves as cofactor.

It catalyses the reaction beta-D-fructose 1,6-bisphosphate + H2O = beta-D-fructose 6-phosphate + phosphate. It participates in carbohydrate biosynthesis; gluconeogenesis. This is Fructose-1,6-bisphosphatase class 3 from Staphylococcus aureus (strain bovine RF122 / ET3-1).